Consider the following 268-residue polypeptide: Tryptophan synthase alpha chain (268 aa).

Catalysis depends on proton acceptor residues glutamate 49 and aspartate 60.

This sequence belongs to the TrpA family. Tetramer of two alpha and two beta chains.

It catalyses the reaction (1S,2R)-1-C-(indol-3-yl)glycerol 3-phosphate + L-serine = D-glyceraldehyde 3-phosphate + L-tryptophan + H2O. Its pathway is amino-acid biosynthesis; L-tryptophan biosynthesis; L-tryptophan from chorismate: step 5/5. Functionally, the alpha subunit is responsible for the aldol cleavage of indoleglycerol phosphate to indole and glyceraldehyde 3-phosphate. The sequence is that of Tryptophan synthase alpha chain from Citrobacter koseri (strain ATCC BAA-895 / CDC 4225-83 / SGSC4696).